An 834-amino-acid polypeptide reads, in one-letter code: Glycerol-3-phosphate acyltransferase (834 aa).

The HXXXXD motif signature appears at 309 to 314 (CHRSHI).

Belongs to the GPAT/DAPAT family.

The protein localises to the cell inner membrane. The enzyme catalyses sn-glycerol 3-phosphate + an acyl-CoA = a 1-acyl-sn-glycero-3-phosphate + CoA. It functions in the pathway phospholipid metabolism; CDP-diacylglycerol biosynthesis; CDP-diacylglycerol from sn-glycerol 3-phosphate: step 1/3. The chain is Glycerol-3-phosphate acyltransferase from Pseudomonas fluorescens (strain ATCC BAA-477 / NRRL B-23932 / Pf-5).